The following is a 494-amino-acid chain: Flagellin A (494 aa).

The protein belongs to the bacterial flagellin family. In terms of assembly, heteromer of FlaA and FlaB. FlaB is located proximal to the hook while the remainder of the filament is composed of the predominant FlaA.

Its subcellular location is the secreted. The protein localises to the bacterial flagellum. Its function is as follows. Flagellin is the subunit protein which polymerizes to form the filaments of bacterial flagella. Important for motility and virulence. The polypeptide is Flagellin A (flaA) (Helicobacter mustelae).